We begin with the raw amino-acid sequence, 307 residues long: Leucine-rich repeat-containing protein 59 (307 aa).

At Met1 the chain carries N-acetylmethionine. Thr2 is subject to N-acetylthreonine; in Leucine-rich repeat-containing protein 59, N-terminally processed. Over 2–244 (TKAGSKGGNL…KPPPRKHTRS (243 aa)) the chain is Cytoplasmic. LRR repeat units follow at residues 10–31 (NLRD…NEVP), 40–62 (KATV…CGLT), 63–84 (HLVK…FGRL), 86–107 (NLQH…FAQL), and 109–128 (NLKW…AKVA). Ser23 and Ser25 each carry phosphoserine. N6-succinyllysine is present on Lys73. Lys135 carries the N6-acetyllysine modification. A coiled-coil region spans residues 148-216 (MKAVQADQER…KASKREQEKK (69 aa)). Positions 150-241 (AVQADQERER…RPRKPPPRKH (92 aa)) are disordered. The segment covering 154–221 (DQERERQRRL…EQEKKPKKEA (68 aa)) has biased composition (basic and acidic residues). Positions 229-241 (SGSRPRKPPPRKH) are enriched in basic residues. Residues 245-265 (WAVLKVLLLLLLLCVAGGLVV) form a helical membrane-spanning segment. The Lumenal portion of the chain corresponds to 266-307 (CRVTGLHQQPLCTSVNTIYDNAVQGLRHHEILQWVLQTDSQQ).

In terms of assembly, can form homodimers. Interacts with SGO1. Interacts with FGF1.

Its subcellular location is the microsome membrane. It is found in the endoplasmic reticulum membrane. It localises to the nucleus envelope. Functionally, required for nuclear import of FGF1, but not that of FGF2. Might regulate nuclear import of exogenous FGF1 by facilitating interaction with the nuclear import machinery and by transporting cytosolic FGF1 to, and possibly through, the nuclear pores. This Mus musculus (Mouse) protein is Leucine-rich repeat-containing protein 59 (Lrrc59).